The following is a 414-amino-acid chain: Glyco-Gag protein (414 aa).

Topologically, residues 1–51 (MSGASSGTAIGAHLFGVSPECRVLIGDEGAGPSKSLSEVSFSVWYQSRAAR) are cytoplasmic. Residues 52-72 (LVIFCLVASFLVPCLTFLIAE) traverse the membrane as a helical segment. The Extracellular segment spans residues 73–414 (TVMGQTIATP…TNLAQVKQVV (342 aa)). Asn134 is a glycosylation site (N-linked (GlcNAc...) asparagine; by host). A disordered region spans residues 171 to 282 (VRPFLPPPKP…LREGPNNRPQ (112 aa)). Positions 174 to 193 (FLPPPKPPTPLPQPLSPQPS) are enriched in pro residues. Residues 194–206 (APLTSSLYPVLPK) are compositionally biased toward low complexity. A compositionally biased stretch (pro residues) spans 210 to 220 (PKPPVLPPDPS).

Glycosylated by host. Post-translationally, cleaved by host near the middle of the molecule, releasing the c-terminal half containing capsid and nucleoprotein domains op GAG.

It is found in the host cell membrane. Plays a role in viral particle release. Presumably acts by facilitating the fission of the virion bud at the cell surface. The chain is Glyco-Gag protein from Felidae (cat family).